We begin with the raw amino-acid sequence, 20 residues long: T cell receptor alpha joining 3 (20 aa).

In terms of assembly, alpha-beta TR is a heterodimer composed of an alpha and beta chain; disulfide-linked. The alpha-beta TR is associated with the transmembrane signaling CD3 coreceptor proteins to form the TR-CD3 (TcR or TCR). The assembly of alpha-beta TR heterodimers with CD3 occurs in the endoplasmic reticulum where a single alpha-beta TR heterodimer associates with one CD3D-CD3E heterodimer, one CD3G-CD3E heterodimer and one CD247 homodimer forming a stable octameric structure. CD3D-CD3E and CD3G-CD3E heterodimers preferentially associate with TR alpha and TR beta chains, respectively. The association of the CD247 homodimer is the last step of TcR assembly in the endoplasmic reticulum and is required for transport to the cell surface.

The protein resides in the cell membrane. In terms of biological role, j region of the variable domain of T cell receptor (TR) alpha chain that participates in the antigen recognition. Alpha-beta T cell receptors are antigen specific receptors which are essential to the immune response and are present on the cell surface of T lymphocytes. Recognize peptide-major histocompatibility (MH) (pMH) complexes that are displayed by antigen presenting cells (APC), a prerequisite for efficient T cell adaptive immunity against pathogens. Binding of alpha-beta TR to pMH complex initiates TR-CD3 clustering on the cell surface and intracellular activation of LCK that phosphorylates the ITAM motifs of CD3G, CD3D, CD3E and CD247 enabling the recruitment of ZAP70. In turn ZAP70 phosphorylates LAT, which recruits numerous signaling molecules to form the LAT signalosome. The LAT signalosome propagates signal branching to three major signaling pathways, the calcium, the mitogen-activated protein kinase (MAPK) kinase and the nuclear factor NF-kappa-B (NF-kB) pathways, leading to the mobilization of transcription factors that are critical for gene expression and essential for T cell growth and differentiation. The T cell repertoire is generated in the thymus, by V-(D)-J rearrangement. This repertoire is then shaped by intrathymic selection events to generate a peripheral T cell pool of self-MH restricted, non-autoaggressive T cells. Post-thymic interaction of alpha-beta TR with the pMH complexes shapes TR structural and functional avidity. The chain is T cell receptor alpha joining 3 from Homo sapiens (Human).